The sequence spans 251 residues: B3 domain-containing protein At2g24670 (251 aa).

The segment at 48-111 (TTPSTVMESK…SSKTREPTPG (64 aa)) is disordered. The segment covering 56–70 (SKSHIHDHSLRESPT) has biased composition (basic and acidic residues). A DNA-binding region (TF-B3) is located at residues 153–249 (VSQIVELEFL…TLYFALVPLY (97 aa)).

It is found in the nucleus. This Arabidopsis thaliana (Mouse-ear cress) protein is B3 domain-containing protein At2g24670.